A 467-amino-acid polypeptide reads, in one-letter code: Neuromedin-K receptor (467 aa).

Over 1 to 86 (MDSFAAAETW…TNQFVQPSWR (86 aa)) the chain is Extracellular. N23, N50, and N75 each carry an N-linked (GlcNAc...) asparagine glycan. The helical transmembrane segment at 87-109 (IALWSLAYGVVVAVAVFGNLIVI) threads the bilayer. Over 110–119 (WIILAHKRMR) the chain is Cytoplasmic. The chain crosses the membrane as a helical span at residues 120–141 (TVTNYFLVNLAFSDASMAAFNT). Topologically, residues 142–161 (LVNFIYALHSEWYFGANYCR) are extracellular. C160 and C235 form a disulfide bridge. Residues 162 to 183 (FQNFFPITAVFASIYSMTAIAV) form a helical membrane-spanning segment. The Cytoplasmic portion of the chain corresponds to 184-203 (DRYMAIIDPLKPRLSATATK). Residues 204–224 (IVIGSIWILAFLLALPQCLYS) form a helical membrane-spanning segment. The Extracellular segment spans residues 225-247 (KTKVMPGRTLCYVQWPEGPKQHF). Residues 248–272 (IYHIIVIILVYCFPLLIMGITYTIV) traverse the membrane as a helical segment. Residues 273–301 (GITLWGGEIPGDTCDKYHEQLKAKRKVVK) lie on the Cytoplasmic side of the membrane. The helical transmembrane segment at 302-323 (MMIIVVVTFAICWLPYHIYFIL) threads the bilayer. The Extracellular segment spans residues 324–336 (TAIYQQLNRWKYI). The helical transmembrane segment at 337 to 361 (QQVYLASFWLAMSSTMYNPIIYCCL) threads the bilayer. At 362–467 (NKRFRAGFKR…SPYTSMEEYS (106 aa)) the chain is on the cytoplasmic side. C376 is lipidated: S-palmitoyl cysteine. Positions 416–467 (DPSDADNTRSSRKKRATPGDPNFNGCSRRNSKSASTTSSFISSPYTSMEEYS) are disordered. Over residues 447–467 (KSASTTSSFISSPYTSMEEYS) the composition is skewed to low complexity.

The protein belongs to the G-protein coupled receptor 1 family.

The protein resides in the cell membrane. Its function is as follows. This is a receptor for the tachykinin neuropeptide neuromedin-K (neurokinin B). It is associated with G proteins that activate a phosphatidylinositol-calcium second messenger system. This chain is Neuromedin-K receptor (TACR3), found in Oryctolagus cuniculus (Rabbit).